A 445-amino-acid polypeptide reads, in one-letter code: Exodeoxyribonuclease 7 large subunit (445 aa).

It belongs to the XseA family. Heterooligomer composed of large and small subunits.

Its subcellular location is the cytoplasm. The enzyme catalyses Exonucleolytic cleavage in either 5'- to 3'- or 3'- to 5'-direction to yield nucleoside 5'-phosphates.. In terms of biological role, bidirectionally degrades single-stranded DNA into large acid-insoluble oligonucleotides, which are then degraded further into small acid-soluble oligonucleotides. The chain is Exodeoxyribonuclease 7 large subunit from Xanthomonas oryzae pv. oryzae (strain KACC10331 / KXO85).